A 455-amino-acid polypeptide reads, in one-letter code: Ammonium transporter Rh type B (455 aa).

Over 1–10 (MARIPRHRRL) the chain is Cytoplasmic. Residues 11–31 (VLPLLCLLFQGATSLLFAIFV) traverse the membrane as a helical segment. Over 32–58 (RYNHETDAALWHWGNHSNVDNEFYFRY) the chain is Extracellular. An N-linked (GlcNAc...) asparagine glycan is attached at asparagine 46. Residues 59 to 79 (PSFQDVHVMVFVGFGFLMVFL) form a helical membrane-spanning segment. Residues 80-83 (QRYG) are Cytoplasmic-facing. A helical membrane pass occupies residues 84–104 (FSSVGFTFLVATFTLQWATLL). Residues 105–121 (QGFLHSFHGGHIHIGVE) are Extracellular-facing. Residues 122–142 (SLINADFCAGAVLISFGAVLG) traverse the membrane as a helical segment. Residues 143-148 (KTGPAQ) lie on the Cytoplasmic side of the membrane. The chain crosses the membrane as a helical span at residues 149–169 (LLLMALLEAVLFSVNEFILLS). Over 170 to 176 (LLGVRDA) the chain is Extracellular. The helical transmembrane segment at 177-197 (GGSMTIHTFGAYFGLFLSRVL) threads the bilayer. Residues 198 to 216 (YRSQLEKSRHRQTSVYNSD) are Cytoplasmic-facing. A helical transmembrane segment spans residues 217–237 (LFAMIGTIFLWVFWPSFNSAP). The Extracellular portion of the chain corresponds to 238–247 (TALGDGQHRT). Residues 248–270 (VVNTYYSLTASTLSTFALSALVS) form a helical membrane-spanning segment. At 271-274 (GDGR) the chain is on the cytoplasmic side. Residues 275–295 (LDMVHIQNAALAGGVVVGTAS) traverse the membrane as a helical segment. A topological domain (extracellular) is located at residue glutamate 296. Residues 297 to 317 (MMLTPFGALAAGFLAGTVSTL) form a helical membrane-spanning segment. The Cytoplasmic portion of the chain corresponds to 318-340 (GYKFFTPILESRFKLQDTCGVHN). Residues 341–361 (LHGMPGLLGAILGVLVAALAT) form a helical membrane-spanning segment. Topologically, residues 362-390 (HEAYGDGLQTVFPLIAKGQRSATSQAMYQ) are extracellular. Residues 391 to 411 (LFGMFVTLVFASVGGSLGGLL) traverse the membrane as a helical segment. At 412–455 (LKLPFLDSPPDSQCFEDQVYWEVPGEQEAETQRPLRTEEPDTQA) the chain is on the cytoplasmic side. The interval 413-421 (KLPFLDSPP) is interaction with ANK3.

Belongs to the ammonium transporter (TC 2.A.49) family. Rh subfamily. As to quaternary structure, interacts (via C-terminus) with ANK2 and ANK3; required for targeting to the basolateral membrane. In terms of processing, N-glycosylated. In terms of tissue distribution, expressed in kidney by connecting segments and collecting tubules (at protein level).

It localises to the basolateral cell membrane. The protein localises to the cytoplasmic vesicle membrane. It catalyses the reaction NH4(+)(in) = NH4(+)(out). It carries out the reaction methylamine(out) = methylamine(in). The catalysed reaction is CO2(out) = CO2(in). Functionally, ammonium transporter involved in the maintenance of acid-base homeostasis. Transports ammonium and its related derivative methylammonium across the basolateral plasma membrane of epithelial cells likely contributing to renal transepithelial ammonia transport and ammonia metabolism. May transport either NH4(+) or NH3 ammonia species predominantly mediating an electrogenic NH4(+) transport. May act as a CO2 channel providing for renal acid secretion. In Rattus norvegicus (Rat), this protein is Ammonium transporter Rh type B (Rhbg).